We begin with the raw amino-acid sequence, 239 residues long: 1-(5-phosphoribosyl)-5-[(5-phosphoribosylamino)methylideneamino] imidazole-4-carboxamide isomerase (239 aa).

Residue Asp-12 is the Proton acceptor of the active site. Residue Asp-132 is the Proton donor of the active site.

Belongs to the HisA/HisF family.

The protein localises to the cytoplasm. The enzyme catalyses 1-(5-phospho-beta-D-ribosyl)-5-[(5-phospho-beta-D-ribosylamino)methylideneamino]imidazole-4-carboxamide = 5-[(5-phospho-1-deoxy-D-ribulos-1-ylimino)methylamino]-1-(5-phospho-beta-D-ribosyl)imidazole-4-carboxamide. The protein operates within amino-acid biosynthesis; L-histidine biosynthesis; L-histidine from 5-phospho-alpha-D-ribose 1-diphosphate: step 4/9. This is 1-(5-phosphoribosyl)-5-[(5-phosphoribosylamino)methylideneamino] imidazole-4-carboxamide isomerase from Natronomonas pharaonis (strain ATCC 35678 / DSM 2160 / CIP 103997 / JCM 8858 / NBRC 14720 / NCIMB 2260 / Gabara) (Halobacterium pharaonis).